Consider the following 433-residue polypeptide: Enolase (433 aa).

Q167 is a (2R)-2-phosphoglycerate binding site. Residue E209 is the Proton donor of the active site. Mg(2+) is bound by residues D246, E291, and D318. Residues K343, R372, S373, and K394 each contribute to the (2R)-2-phosphoglycerate site. The active-site Proton acceptor is the K343.

It belongs to the enolase family. As to quaternary structure, component of the RNA degradosome, a multiprotein complex involved in RNA processing and mRNA degradation. It depends on Mg(2+) as a cofactor.

The protein localises to the cytoplasm. It is found in the secreted. The protein resides in the cell surface. It carries out the reaction (2R)-2-phosphoglycerate = phosphoenolpyruvate + H2O. It participates in carbohydrate degradation; glycolysis; pyruvate from D-glyceraldehyde 3-phosphate: step 4/5. In terms of biological role, catalyzes the reversible conversion of 2-phosphoglycerate (2-PG) into phosphoenolpyruvate (PEP). It is essential for the degradation of carbohydrates via glycolysis. This chain is Enolase, found in Vibrio vulnificus (strain YJ016).